The primary structure comprises 304 residues: Non-specific ribonucleoside hydrolase RihC (304 aa).

Residue histidine 233 is part of the active site.

It belongs to the IUNH family. RihC subfamily.

In terms of biological role, hydrolyzes both purine and pyrimidine ribonucleosides with a broad-substrate specificity. This is Non-specific ribonucleoside hydrolase RihC from Escherichia coli O127:H6 (strain E2348/69 / EPEC).